The chain runs to 115 residues: Large ribosomal subunit protein bL19 (115 aa).

Belongs to the bacterial ribosomal protein bL19 family.

Its function is as follows. This protein is located at the 30S-50S ribosomal subunit interface and may play a role in the structure and function of the aminoacyl-tRNA binding site. This chain is Large ribosomal subunit protein bL19, found in Buchnera aphidicola subsp. Acyrthosiphon pisum (strain 5A).